A 213-amino-acid chain; its full sequence is Ribonuclease HII (213 aa).

An RNase H type-2 domain is found at 20-209 (ELVAGVDEVG…VRQAYEALEG (190 aa)). A divalent metal cation is bound by residues D26, E27, and D118.

It belongs to the RNase HII family. Mn(2+) is required as a cofactor. The cofactor is Mg(2+).

It is found in the cytoplasm. It carries out the reaction Endonucleolytic cleavage to 5'-phosphomonoester.. Its function is as follows. Endonuclease that specifically degrades the RNA of RNA-DNA hybrids. This Pseudomonas fluorescens (strain Pf0-1) protein is Ribonuclease HII.